Reading from the N-terminus, the 82-residue chain is Probable [Fe-S]-dependent transcriptional repressor (82 aa).

The iron-sulfur cluster site is built by C56, C61, C64, and C71.

This sequence belongs to the FeoC family.

In terms of biological role, may function as a transcriptional regulator that controls feoABC expression. This Yersinia enterocolitica serotype O:8 / biotype 1B (strain NCTC 13174 / 8081) protein is Probable [Fe-S]-dependent transcriptional repressor.